Consider the following 449-residue polypeptide: Glucose-6-phosphate isomerase (449 aa).

E291 functions as the Proton donor in the catalytic mechanism. Active-site residues include H312 and K426.

This sequence belongs to the GPI family.

The protein resides in the cytoplasm. It carries out the reaction alpha-D-glucose 6-phosphate = beta-D-fructose 6-phosphate. The protein operates within carbohydrate biosynthesis; gluconeogenesis. Its pathway is carbohydrate degradation; glycolysis; D-glyceraldehyde 3-phosphate and glycerone phosphate from D-glucose: step 2/4. Catalyzes the reversible isomerization of glucose-6-phosphate to fructose-6-phosphate. The polypeptide is Glucose-6-phosphate isomerase (Streptococcus pyogenes serotype M5 (strain Manfredo)).